Here is a 129-residue protein sequence, read N- to C-terminus: uncharacterized protein (129 aa).

The next 3 helical transmembrane spans lie at 15–35 (IFII…IFVF), 48–68 (IFSF…YYFF), and 107–127 (INIF…NLVC).

The protein resides in the membrane. This is an uncharacterized protein from Saccharomyces cerevisiae (strain ATCC 204508 / S288c) (Baker's yeast).